We begin with the raw amino-acid sequence, 186 residues long: MDNSESWLEIGRIVAAQGLKGELKVMSSSDFPERFEKPGTRWLQSPDRLSIQEVELVRGRYVPGKNLYVIKLAEIADRTQAETLRDYTLLVPSSDRPQLNEGEYHVSDLINLTVYHQQTGEEIGVVTDMLSAGNDLLEVQLNTLNSSENTSSKKVLIPFVYEIVPVVDLVNKRIEINPPVGLLELS.

The region spanning 100 to 182 is the PRC barrel domain; it reads NEGEYHVSDL…RIEINPPVGL (83 aa).

This sequence belongs to the RimM family. In terms of assembly, binds ribosomal protein uS19.

The protein localises to the cytoplasm. Functionally, an accessory protein needed during the final step in the assembly of 30S ribosomal subunit, possibly for assembly of the head region. Essential for efficient processing of 16S rRNA. May be needed both before and after RbfA during the maturation of 16S rRNA. It has affinity for free ribosomal 30S subunits but not for 70S ribosomes. This Rippkaea orientalis (strain PCC 8801 / RF-1) (Cyanothece sp. (strain PCC 8801)) protein is Ribosome maturation factor RimM.